We begin with the raw amino-acid sequence, 866 residues long: Probable beta-glucosidase F (866 aa).

Positions M1–S20 are cleaved as a signal peptide. 3 N-linked (GlcNAc...) asparagine glycosylation sites follow: N65, N73, and N257. Residue D285 is part of the active site. N328, N360, N395, N421, N474, N659, N664, and N724 each carry an N-linked (GlcNAc...) asparagine glycan. The disordered stretch occupies residues S725–A748.

Belongs to the glycosyl hydrolase 3 family.

The protein resides in the secreted. It catalyses the reaction Hydrolysis of terminal, non-reducing beta-D-glucosyl residues with release of beta-D-glucose.. The protein operates within glycan metabolism; cellulose degradation. Its function is as follows. Beta-glucosidases are one of a number of cellulolytic enzymes involved in the degradation of cellulosic biomass. Catalyzes the last step releasing glucose from the inhibitory cellobiose. In Aspergillus flavus (strain ATCC 200026 / FGSC A1120 / IAM 13836 / NRRL 3357 / JCM 12722 / SRRC 167), this protein is Probable beta-glucosidase F (bglF).